We begin with the raw amino-acid sequence, 171 residues long: Neuronal vesicle trafficking-associated protein 2 (171 aa).

The disordered stretch occupies residues 1–21 (MVKLNSNPGEKGAKPPSVEDG). Residues 1–71 (MVKLNSNPGE…FRVPKIAEFT (71 aa)) are Cytoplasmic-facing. Residues 72 to 92 (VTILVSLALAFLACIVFLVVY) form a helical; Signal-anchor for type II membrane protein membrane-spanning segment. The Lumenal segment spans residues 93-171 (KAFTYDHSCP…EPKPPKTQGH (79 aa)).

The protein belongs to the NSG family. In terms of tissue distribution, specifically expressed in neural and neuroendocrine tissues. Pituitary and less in adrenal gland and testis. Expressed in the hippocampus throughout development. Remains enriched in layer V cortical neurons during development. At P0, broadly expressed in the neocortex. Is down-regulated overall at P8 and P14, but remains relatively enriched in layer V. At P0 is lower expressed in the cerebellum. Expression remains low throughout development, and is undetectable by adulthood.

The protein resides in the membrane. The protein localises to the golgi apparatus. It localises to the trans-Golgi network membrane. Its subcellular location is the cell projection. It is found in the dendrite. The protein resides in the endosome membrane. The protein localises to the early endosome membrane. It localises to the late endosome membrane. Its subcellular location is the lysosome lumen. It is found in the cytoplasmic vesicle membrane. The protein resides in the golgi stack membrane. The protein localises to the endosome. It localises to the multivesicular body membrane. This chain is Neuronal vesicle trafficking-associated protein 2, found in Mus musculus (Mouse).